A 433-amino-acid chain; its full sequence is Inorganic triphosphatase (433 aa).

Residues alanine 2–asparagine 202 enclose the CYTH domain. The 216-residue stretch at lysine 218 to arginine 433 folds into the CHAD domain.

It catalyses the reaction triphosphate + H2O = phosphate + diphosphate. Its activity is regulated as follows. Inhibited by calcium ion and activated by magnesium ion. Its function is as follows. Involved in the hydrolysis of the beta-gamma-phosphoanhydride linkage of triphosphate-containing substrates (inorganic or nucleoside-linked). Catalyzes the hydrolysis of inorganic triphosphate (PPPi), which could be cytotoxic because of its high affinity for calcium ion, thereby interfering with calcium signaling. It also hydrolyzes slowly thiamine triphosphate (ThTP). YgiF is a specific PPPase, but it contributes only marginally to the total PPPase activity in E.coli, where the main enzyme responsible for hydrolysis of PPPi is inorganic pyrophosphatase (PPase). This Escherichia coli (strain K12) protein is Inorganic triphosphatase (ygiF).